The chain runs to 583 residues: Ribonuclease ZC3H12A (583 aa).

Over residues 1–11 (MSLWELEDRRS) the composition is skewed to basic and acidic residues. Disordered stretches follow at residues 1–29 (MSLW…EATT) and 73–119 (GSAA…GSDL). Over residues 15–29 (TPRPAQEPTAEEATT) the composition is skewed to low complexity. The interval 26–71 (EATTAELQMKVDFFRKLGYSSAEIHSVLQKLGIQADTNTVLGELVK) is ubiquitin association domain. The necessary for interaction with TANK stretch occupies residues 65–134 (VLGELVKHGS…DGSNVAMSHG (70 aa)). Over residues 73–82 (GSAAERERQA) the composition is skewed to basic and acidic residues. Residue serine 83 is modified to Phosphoserine. Residues 96–281 (GGGTPKAPTV…LDNFLRKKPL (186 aa)) form an RNase region. The RNase NYN domain occupies 119 to 274 (LRPIVIDGSN…LGRHGPSLDN (156 aa)). The tract at residues 198–204 (RRVGGKR) is RNA binding. Aspartate 210 is a Mg(2+) binding site. 2 disordered regions span residues 262–290 (DDPL…KQPC) and 323–404 (ANAL…PSEW). Residues 284 to 309 (EHKKQPCPYGRKCTYGIKCRFLHPER) form a C3H1-type zinc finger. Residues 285–441 (HKKQPCPYGR…SELWGVRGGG (157 aa)) form a necessary for interaction with ZC3H12D region. Low complexity predominate over residues 341–352 (RPSPSSQPGSLP). Over residues 353–364 (TEHEQCSPDRKK) the composition is skewed to basic and acidic residues. The segment covering 384–393 (PTGRSLPPSG) has biased composition (low complexity). A phosphoserine mark is found at serine 422 and serine 426. The disordered stretch occupies residues 503-530 (YQLPPPTQRLQEPQAPGPGADRGPWGGA).

Belongs to the ZC3H12 family. Oligomer. Found in a deubiquitination complex with TANK, USP10 and ZC3H12A; this complex inhibits genotoxic stress- or interleukin-1-beta-mediated NF-kappaB activation by promoting IKBKG or TRAF6 deubiquitination. Interacts with IKBKG; this interaction increases in response to DNA damage. Interacts with TANK; this interaction increases in response to DNA damage and serves as a bridge to anchor both TANK and USP10 into a deubiquitinating complex. Interacts with TRAF6; this interaction increases in response to DNA damage and is stimulated by TANK. Interacts with USP10; this interaction increases in response to DNA damage and serves as a bridge to anchor both TANK and USP10 into a deubiquitinating complex. Interacts with ZC3H12D. Interacts with TNRC6A. Interacts with IKBKB/IKKB. Interacts with IKBKB/IKKB. Interacts with BTRC; the interaction occurs when ZC3H12A is phosphorylated in a IKBKB/IKKB-dependent manner. Interacts with IRAK1; this interaction increases the interaction between ZC3H12A and IKBKB/IKKB. Interacts with UPF1; this interaction occurs in a mRNA translationally active- and termination-dependent manner and is essential for ZC3H12A-mediated degradation of target mRNAs. Associates with ribosomes. Interacts with ubiquitin. The cofactor is Mg(2+). In terms of processing, phosphorylated by IRAK1; phosphorylation is necessary for subsequent phosphorylation by the I-kappa-B-kinase (IKK) complex. Phosphorylated by I-kappa-B-kinase (IKK) subunits IKBKB/IKKB and CHUK/IKKA at Ser-422 and Ser-426; these phosphorylations promote ubiquitin proteasome-mediated degradation of ZC3H12A and hence facilitates rapid and robust production of IL-6 mRNA in response to toll-like receptor (TLR) or IL-1 receptor stimuli. Ubiquitinated; ubiquitination is induced in response to interleukin IL1 receptor stimuli in a IKBKB/IKKB and IRAK1-dependent manner, leading to proteasome-mediated degradation. Post-translationally, proteolytically cleaved between Arg-95 and Arg-198 by MALT1 in activated T-cells; cleavage at Arg-95 is critical for promoting ZC3H12A degradation in response to T-cell receptor (TCR) stimulation, and hence is necessary for prolonging the stability of a set of mRNAs controlling T-cell activation and Th17 cell differentiation.

It localises to the nucleus. The protein localises to the cytoplasm. It is found in the P-body. The protein resides in the rough endoplasmic reticulum membrane. Its subcellular location is the cytoplasmic granule. In terms of biological role, endoribonuclease involved in various biological functions such as cellular inflammatory response and immune homeostasis, glial differentiation of neuroprogenitor cells, cell death of cardiomyocytes, adipogenesis and angiogenesis. Functions as an endoribonuclease involved in mRNA decay. Modulates the inflammatory response by promoting the degradation of a set of translationally active cytokine-induced inflammation-related mRNAs, such as IL6 and IL12B, during the early phase of inflammation. Prevents aberrant T-cell-mediated immune reaction by degradation of multiple mRNAs controlling T-cell activation, such as those encoding cytokines (IL6 and IL2), cell surface receptors (ICOS, TNFRSF4 and TNFR2) and transcription factor (REL). Inhibits cooperatively with ZC3H12A the differentiation of helper T cells Th17 in lungs. They repress target mRNA encoding the Th17 cell-promoting factors IL6, ICOS, REL, IRF4, NFKBID and NFKBIZ. The cooperation requires RNA-binding by RC3H1 and the nuclease activity of ZC3H12A. Together with RC3H1, destabilizes TNFRSF4/OX40 mRNA by binding to the conserved stem loop structure in its 3'UTR. Self regulates by destabilizing its own mRNA. Cleaves mRNA harboring a stem-loop (SL), often located in their 3'-UTRs, during the early phase of inflammation in a helicase UPF1-dependent manner. Plays a role in the inhibition of microRNAs (miRNAs) biogenesis. Cleaves the terminal loop of a set of precursor miRNAs (pre-miRNAs) important for the regulation of the inflammatory response leading to their degradation, and thus preventing the biosynthesis of mature miRNAs. Also plays a role in promoting angiogenesis in response to inflammatory cytokines by inhibiting the production of antiangiogenic microRNAs via its anti-dicer RNase activity. Affects the overall ubiquitination of cellular proteins. Positively regulates deubiquitinase activity promoting the cleavage at 'Lys-48'- and 'Lys-63'-linked polyubiquitin chains on TNF receptor-associated factors (TRAFs), preventing JNK and NF-kappa-B signaling pathway activation, and hence negatively regulating macrophage-mediated inflammatory response and immune homeostasis. Also induces deubiquitination of the transcription factor HIF1A, probably leading to its stabilization and nuclear import, thereby positively regulating the expression of proangiogenic HIF1A-targeted genes. Involved in a TANK-dependent negative feedback response to attenuate NF-kappaB activation through the deubiquitination of IKBKG or TRAF6 in response to interleukin-1-beta (IL1B) stimulation or upon DNA damage. Prevents stress granules (SGs) formation and promotes macrophage apoptosis under stress conditions, including arsenite-induced oxidative stress, heat shock, and energy deprivation. Plays a role in the regulation of macrophage polarization; promotes IL4-induced polarization of macrophages M1 into anti-inflammatory M2 state. May also act as a transcription factor that regulates the expression of multiple genes involved in inflammatory response, angiogenesis, adipogenesis and apoptosis. Functions as a positive regulator of glial differentiation of neuroprogenitor cells through an amyloid precursor protein (APP)-dependent signaling pathway. Attenuates septic myocardial contractile dysfunction in response to lipopolysaccharide (LPS) by reducing I-kappa-B-kinase (IKK)-mediated NF-kappa-B activation, and hence myocardial pro-inflammatory cytokine production. This chain is Ribonuclease ZC3H12A, found in Bos taurus (Bovine).